Here is a 459-residue protein sequence, read N- to C-terminus: UDP-glycosyltransferase 78D3 (459 aa).

UDP-alpha-D-glucose is bound by residues 338–340 (APQ), 355–363 (HGGWNSVLE), and 377–380 (FGDH).

This sequence belongs to the UDP-glycosyltransferase family.

Its function is as follows. Possesses low quercetin 3-O-glucosyltransferase activity in vitro. This Arabidopsis thaliana (Mouse-ear cress) protein is UDP-glycosyltransferase 78D3 (UGT78D3).